Here is a 1142-residue protein sequence, read N- to C-terminus: Envelopment polyprotein (1142 aa).

The first 21 residues, 1–21 (MSKFCLCLSLLGVLLLQVCDT), serve as a signal peptide directing secretion. Residues 22–489 (RSLLELKIEC…LCVPGIHGWS (468 aa)) lie on the Lumenal side of the membrane. Disulfide bonds link Cys31–Cys156, Cys65–Cys162, Cys114–Cys133, Cys138–Cys143, Cys180–Cys190, and Cys215–Cys253. The N-linked (GlcNAc...) asparagine; by host glycan is linked to Asn139. An N-linked (GlcNAc...) asparagine; by host glycan is attached at Asn353. Intrachain disulfides connect Cys382-Cys441, Cys386-Cys395, Cys411-Cys430, and Cys458-Cys481. A glycan (N-linked (GlcNAc...) asparagine; by host) is linked at Asn405. The chain crosses the membrane as a helical span at residues 490–510 (TIALLATFCFGWLLIPIISLV). Topologically, residues 511 to 633 (SIKIMLLFAY…LSVFRYRSRC (123 aa)) are cytoplasmic. Positions 522-539 (CSKYSNDSKFRLLIEKVK) are binding to the ribonucleoprotein. 2 CCHC-type zinc fingers span residues 551–571 (CEVCQQECEMAKELESHKKSC) and 576–597 (CPYCMNPTESTESALQAHFKVC). Binding to the ribonucleoprotein stretches follow at residues 594 to 611 (FKVCKLTTRFQENLRKSL), 598 to 609 (KLTTRFQENLRK), and 617 to 631 (KRGCYRTLSVFRYRS). Residues 617–640 (KRGCYRTLSVFRYRSRCFVGLVWC) form the ITAM domain. The YxxL signature appears at 621–624 (YRTL). The chain crosses the membrane as a helical span at residues 634–654 (FVGLVWCILLVLELVIWAASA). Residues 655–1110 (DTVEIKTGWT…EWLMGILSGN (456 aa)) lie on the Lumenal side of the membrane. Intrachain disulfides connect Cys741-Cys776, Cys745-Cys783, Cys757-Cys890, Cys771-Cys901, Cys786-Cys909, Cys812-Cys821, Cys829-Cys838, and Cys869-Cys873. Residues 763 to 783 (YEFETGWGCNPGDCPGVGTGC) form a fusion loop region. N-linked (GlcNAc...) asparagine; by host glycosylation occurs at Asn933. Intrachain disulfides connect Cys975–Cys1005, Cys998–Cys1050, Cys1015–Cys1020, Cys1051–Cys1056, and Cys1090–Cys1094. Residues 1111 to 1131 (WMVVAVLVVLLILSIFLFSLC) traverse the membrane as a helical segment. Positions 1127–1142 (LFSLCCPRRVVHKKSS) are binding to the ribonucleoprotein. Residues 1132 to 1142 (CPRRVVHKKSS) are Cytoplasmic-facing.

It belongs to the hantavirus envelope glycoprotein family. As to quaternary structure, homodimer. Homotetramer; forms heterotetrameric Gn-Gc spikes in the pre-fusion conformation. Interacts (via C-terminus) with the nucleoprotein. Interacts with host TUFM; this interaction contributes to the virus-induced degradation of mitochondria by autophagy, which leads to degradation of host MAVS and inhibition of type I interferon (IFN) responses. Interacts with host MAP1LC3B; this interaction contributes to the virus-induced degradation of mitochondria by autophagy, which leads to degradation of host MAVS and inhibition of type I interferon (IFN) responses. Homodimer. Homotetramer; forms heterotetrameric Gn-Gc spikes in the pre-fusion conformation. Homotrimer; forms homotrimer in the post-fusion conformation at acidic pH. Interacts (via C-terminus) with the nucleoprotein. Envelope polyprotein precursor is quickly cleaved in vivo just after synthesis, presumably by host signal peptidase.

The protein localises to the virion membrane. It is found in the host cell surface. The protein resides in the host Golgi apparatus membrane. Its subcellular location is the host endoplasmic reticulum membrane. It localises to the host mitochondrion. Its function is as follows. Forms homotetramers with glycoprotein C at the surface of the virion. Attaches the virion to host cell receptors including integrin alpha5/ITGB1. This attachment induces virion internalization predominantly through clathrin-dependent endocytosis. Mediates the assembly and budding of infectious virus particles through its interaction with the nucleocapsid protein and the viral genome. May dysregulate normal immune and endothelial cell responses through an ITAM motif. Translocates to mitochondria, binds to host TUFM and recruits MAP1LC3B. These interactions induce mitochondrial autophagy and therefore destruction of host MAVS leading to inhibition of type I interferon (IFN) responses. Concomitant breakdown of glycoprotein N is apparently prevented by the nucleoprotein that may inhibit Gn-stimulated autophagosome-lysosome fusion. Interacts with the viral genomic RNA. Forms homotetramers with glycoprotein N at the surface of the virion. Attaches the virion to host cell receptors including integrin ITGAV/ITGB3. This attachment induces virion internalization predominantly through clathrin-dependent endocytosis. Class II fusion protein that promotes fusion of viral membrane with host endosomal membrane after endocytosis of the virion. This chain is Envelopment polyprotein (GP), found in Microtus pennsylvanicus (Meadow vole).